A 336-amino-acid polypeptide reads, in one-letter code: D-aspartate oxidase (336 aa).

Glu-34, Lys-35, Thr-41, Ser-42, Gly-304, Val-308, and Ser-309 together coordinate FAD. A Microbody targeting signal motif is present at residues Ser-334–Leu-336.

This sequence belongs to the DAMOX/DASOX family. As to quaternary structure, monomer. FAD serves as cofactor.

The protein resides in the peroxisome matrix. It catalyses the reaction D-aspartate + O2 + H2O = oxaloacetate + H2O2 + NH4(+). The catalysed reaction is D-glutamate + O2 + H2O = H2O2 + 2-oxoglutarate + NH4(+). Selectively catalyzes the oxidative deamination of acidic amino acids. Suppresses the level of D-aspartate in the brain, an amino acid that can act as an agonist for glutamate receptors. Protects the organism from the toxicity of D-amino acids. May also function in the intestine. In Octopus vulgaris (Common octopus), this protein is D-aspartate oxidase.